The following is a 151-amino-acid chain: Chaperonin GroEL (151 aa).

ATP is bound at residue 41 to 45; that stretch reads DGTTT.

This sequence belongs to the chaperonin (HSP60) family. In terms of assembly, forms a cylinder of 14 subunits composed of two heptameric rings stacked back-to-back. Interacts with the co-chaperonin GroES.

The protein localises to the cytoplasm. The catalysed reaction is ATP + H2O + a folded polypeptide = ADP + phosphate + an unfolded polypeptide.. In terms of biological role, together with its co-chaperonin GroES, plays an essential role in assisting protein folding. The GroEL-GroES system forms a nano-cage that allows encapsulation of the non-native substrate proteins and provides a physical environment optimized to promote and accelerate protein folding. The chain is Chaperonin GroEL from Mycobacterium marinum.